A 638-amino-acid polypeptide reads, in one-letter code: Stress-activated protein kinase alpha (638 aa).

ANK repeat units follow at residues 43–72 (YGQSALTIALKNNNEEMVELLLSLCVTLKA), 80–109 (NGFSALHQAVSSDDRILMRVLQYENINVDV), 113–146 (DLNTPIHYFCQKFRSPNCQEPFQLFIQKGVNVNA), 150–181 (NGETPLHKAIFNNSVRLMMVGLLLKNGANVNL), 185–214 (FQESPLHYAVRLGREDLVSVLLKAGADVDC), and 219–248 (ERKTPYQLAVEEGNKDMTARIKKYKDLFDW). Residues 240 to 303 (KKYKDLFDWL…LKETSNLANE (64 aa)) enclose the SAM domain. The 270-residue stretch at 351 to 620 (LEYTEKLGAG…RLVTIENEYR (270 aa)) folds into the Protein kinase domain. ATP-binding positions include 357–365 (LGAGSSGKV) and Lys378. The Proton acceptor role is filled by Asp472.

Belongs to the protein kinase superfamily. TKL Ser/Thr protein kinase family. As to quaternary structure, interacts with F-actin. Autophosphorylated.

The protein localises to the cytoplasm. It localises to the cytoskeleton. The enzyme catalyses L-seryl-[protein] + ATP = O-phospho-L-seryl-[protein] + ADP + H(+). The catalysed reaction is L-threonyl-[protein] + ATP = O-phospho-L-threonyl-[protein] + ADP + H(+). Its function is as follows. May be involved in cortical F-actin organization and resistance to osmotic stress. Activated upon cell detachment, in vitro. This Dictyostelium discoideum (Social amoeba) protein is Stress-activated protein kinase alpha (spkA-1).